The primary structure comprises 236 residues: Putative lipoprotein MlpA (236 aa).

An N-terminal signal peptide occupies residues 1-21 (MTKNIVNTALVLVGAGSLLTG). The N-palmitoyl cysteine moiety is linked to residue cysteine 22. The S-diacylglycerol cysteine moiety is linked to residue cysteine 22.

The protein resides in the cell membrane. The sequence is that of Putative lipoprotein MlpA (mlpA) from Myxococcus xanthus.